Reading from the N-terminus, the 1232-residue chain is Protein transport protein sec-16A.1 (1232 aa).

Disordered regions lie at residues 18–134, 172–193, 815–843, 866–942, 972–1069, and 1140–1232; these read GASG…SGYA, RNGF…EEDE, PVQE…KWHD, KPIA…VVPE, QPIP…PQKQ, and PHLM…QNND. Residues 26-37 show a composition bias toward polar residues; that stretch reads DWNNPYNASPPS. Low complexity predominate over residues 67-76; the sequence is RPILIQPARP. Residues 78–100 show a composition bias toward polar residues; sequence SQKSNRQGTGMSNGSRGLNSTFN. Residues 817–836 show a composition bias toward polar residues; that stretch reads QESQQHVPQPQPVENKSISS. A compositionally biased stretch (low complexity) spans 896 to 914; sequence SSVTVAASASRTSTLTSST. 3 stretches are compositionally biased toward polar residues: residues 1046–1060, 1149–1159, and 1168–1178; these read QQAT…NAKT, SNKSSTNSLRS, and YLQSGMATSQA. Low complexity predominate over residues 1194-1203; sequence PMSFSFMPAP. Over residues 1222–1232 the composition is skewed to polar residues; the sequence is PSESLSKQNND.

It belongs to the SEC16 family. In terms of assembly, interacts with tfg-1 (via N-terminus); the interaction is direct and is required for both the localization of tfg-1 and to maintain the distribution of sec-16A.1 at endoplasmic reticulum exit sites (ERES).

The protein localises to the endoplasmic reticulum. It localises to the endoplasmic reticulum-Golgi intermediate compartment. Functionally, plays a role in the organization of the endoplasmic reticulum exit sites (ERES), also known as transitional endoplasmic reticulum (tER). In association with tfg-1, accumulates at ERES to positively regulate secretory cargo trafficking from the endoplasmic reticulum to the endoplasmic reticulum-Golgi intermediate compartment (ERGIC) and Golgi apparatus. In Caenorhabditis elegans, this protein is Protein transport protein sec-16A.1.